Reading from the N-terminus, the 49-residue chain is Large ribosomal subunit protein bL33A (49 aa).

This sequence belongs to the bacterial ribosomal protein bL33 family.

The protein is Large ribosomal subunit protein bL33A of Staphylococcus saprophyticus subsp. saprophyticus (strain ATCC 15305 / DSM 20229 / NCIMB 8711 / NCTC 7292 / S-41).